The following is a 474-amino-acid chain: Calcium/calmodulin-dependent protein kinase type IV (474 aa).

S11 and S12 each carry phosphoserine; by autocatalysis. Residues 42–296 (FEVESELGRG…TFQALQHPWV (255 aa)) form the Protein kinase domain. Residues 48 to 56 (LGRGATSIV) and K71 each bind ATP. The O-linked (GlcNAc) threonine glycan is linked to T53. O-linked (GlcNAc) serine glycosylation occurs at S54. S133 carries O-linked (GlcNAc) serine glycosylation. The active-site Proton acceptor is the D160. A glycan (O-linked (GlcNAc) serine) is linked at S185. T196 bears the Phosphothreonine; by CaMKK1 and CaMKK2 mark. The interval 297 to 336 (TGKAANFVHMDTAQKKLQEFNARRKLKAAVKAVVASSRLG) is autoinhibitory domain. A PP2A-binding region spans residues 302-319 (NFVHMDTAQKKLQEFNAR). The tract at residues 318–337 (ARRKLKAAVKAVVASSRLGS) is calmodulin-binding. Phosphoserine; by autocatalysis is present on S332. Positions 336-474 (GSASSSHTNI…PQQDAILPEY (139 aa)) are disordered. S337 is subject to Phosphoserine. S340, S341, and S352 each carry an O-linked (GlcNAc) serine glycan. Polar residues predominate over residues 342 to 356 (HTNIQESNKASSEAQ). Positions 360-392 (DGKDKTDPLENKMQAGDHEAAKAAADETMKLQS) are enriched in basic and acidic residues. The segment covering 393-413 (EEVEEEEGVKEEEEEEEEEEE) has biased composition (acidic residues). The span at 431 to 454 (QEMKRNSEETLKSVEEEMDPKAEE) shows a compositional bias: basic and acidic residues. Phosphoserine is present on residues S437 and S443.

Belongs to the protein kinase superfamily. CAMK Ser/Thr protein kinase family. CaMK subfamily. As to quaternary structure, monomer. Interacts with protein phosphatase 2A (PPP2CA/PPP2CB); the interaction is mutually exclusive with binding to Ca(2+)/calmodulin. In terms of processing, phosphorylated by CaMKK1 and CaMKK2 on Thr-196. Dephosphorylated by protein phosphatase 2A. Autophosphorylated on Ser-11 and Ser-12. Glycosylation at Ser-185 modulates the phosphorylation of CaMK4 at Thr-196 and negatively regulates its activity toward CREB1 in basal conditions and during early inomycin stimulation. Post-translationally, the N-terminus of calspermin is blocked. As to expression, isoform 1 is expressed in brain and isoform 2 is testis specific.

It localises to the cytoplasm. It is found in the nucleus. The enzyme catalyses L-seryl-[protein] + ATP = O-phospho-L-seryl-[protein] + ADP + H(+). The catalysed reaction is L-threonyl-[protein] + ATP = O-phospho-L-threonyl-[protein] + ADP + H(+). Activated by Ca(2+)/calmodulin. Binding of calmodulin results in conformational change that relieves intrasteric autoinhibition and allows phosphorylation of Thr-196 within the activation loop by CaMKK1 or CaMKK2. Phosphorylation of Thr-196 results in a 10-20-fold increase in total activity to generate Ca(2+)/calmodulin-independent activity. Autophosphorylation of the N-terminus Ser-11 and Ser-12 is required for full activation. Inactivated by protein phosphatase 2A (PPP2CA/PPP2CB) which dephosphorylates Thr-196, thereby terminating autonomous activity and helping to maintain the enzyme in its autoinhibited state. In terms of biological role, calcium/calmodulin-dependent protein kinase that operates in the calcium-triggered CaMKK-CaMK4 signaling cascade and regulates, mainly by phosphorylation, the activity of several transcription activators, such as CREB1, MEF2D, JUN and RORA, which play pivotal roles in immune response, inflammation, and memory consolidation. In the thymus, regulates the CD4(+)/CD8(+) double positive thymocytes selection threshold during T-cell ontogeny. In CD4 memory T-cells, is required to link T-cell antigen receptor (TCR) signaling to the production of IL2, IFNG and IL4 (through the regulation of CREB and MEF2). Regulates the differentiation and survival phases of osteoclasts and dendritic cells (DCs). Mediates DCs survival by linking TLR4 and the regulation of temporal expression of BCL2. Phosphorylates the transcription activator CREB1 on 'Ser-133' in hippocampal neuron nuclei and contribute to memory consolidation and long term potentiation (LTP) in the hippocampus. Can activate the MAP kinases MAPK1/ERK2, MAPK8/JNK1 and MAPK14/p38 and stimulate transcription through the phosphorylation of ELK1 and ATF2. Can also phosphorylate in vitro CREBBP, PRM2, MEF2A and STMN1/OP18. Heat-stable, acidic, calmodulin-binding protein. The sequence is that of Calcium/calmodulin-dependent protein kinase type IV (Camk4) from Rattus norvegicus (Rat).